The following is a 304-amino-acid chain: tRNA pseudouridine synthase B (304 aa).

Aspartate 38 functions as the Nucleophile in the catalytic mechanism.

Belongs to the pseudouridine synthase TruB family. Type 1 subfamily.

It carries out the reaction uridine(55) in tRNA = pseudouridine(55) in tRNA. Its function is as follows. Responsible for synthesis of pseudouridine from uracil-55 in the psi GC loop of transfer RNAs. The sequence is that of tRNA pseudouridine synthase B from Listeria welshimeri serovar 6b (strain ATCC 35897 / DSM 20650 / CCUG 15529 / CIP 8149 / NCTC 11857 / SLCC 5334 / V8).